The following is a 313-amino-acid chain: Glutathione S-transferase omega-like 2 (313 aa).

Cys49 serves as the catalytic Nucleophile. The region spanning 161-289 (PSSLRTKIDE…TDFKHIKCHY (129 aa)) is the GST C-terminal domain.

This sequence belongs to the GST superfamily. Omega family.

Its subcellular location is the cytoplasm. The protein localises to the nucleus. It is found in the golgi apparatus. The catalysed reaction is RX + glutathione = an S-substituted glutathione + a halide anion + H(+). It catalyses the reaction L-dehydroascorbate + 2 glutathione = glutathione disulfide + L-ascorbate. Functionally, active as '1-Cys' thiol transferase against beta-hydroxyethyl disulfide (HED), as dehydroascorbate reductase and as dimethylarsinic acid reductase, while not active against the standard GST substrate 1-chloro-2,4-dinitrobenzene (CDNB). May be involved in cell wall organization and biogenesis. The polypeptide is Glutathione S-transferase omega-like 2 (gto2) (Schizosaccharomyces pombe (strain 972 / ATCC 24843) (Fission yeast)).